The sequence spans 307 residues: Agmatinase (307 aa).

6 residues coordinate Mn(2+): H128, D151, H153, D155, D232, and D234.

This sequence belongs to the arginase family. Agmatinase subfamily. Requires Mn(2+) as cofactor.

The enzyme catalyses agmatine + H2O = urea + putrescine. It participates in amine and polyamine biosynthesis; putrescine biosynthesis via agmatine pathway; putrescine from agmatine: step 1/1. Functionally, catalyzes the formation of putrescine from agmatine. This Neisseria meningitidis serogroup A / serotype 4A (strain DSM 15465 / Z2491) protein is Agmatinase.